Here is a 514-residue protein sequence, read N- to C-terminus: Carboxysome shell carbonic anhydrase (514 aa).

Positions 1–144 (MNTRNTRSKQ…LTAATEQFSR (144 aa)) are N-terminal domain. A catalytic domain region spans residues 151–397 (DDSASAIGFF…GRYPPNDIGH (247 aa)). C173 serves as a coordination point for Zn(2+). Residue D175 is the Proton acceptor of the active site. Residues H242 and C253 each contribute to the Zn(2+) site. Positions 398–514 (AERYISVGDG…GSPIEEVASA (117 aa)) are C-terminal domain.

Belongs to the beta-class carbonic anhydrase family. CsoSCA subfamily. Homodimer, may form filaments. The cofactor is Zn(2+).

The protein resides in the carboxysome. It catalyses the reaction hydrogencarbonate + H(+) = CO2 + H2O. Carbonic anhydrase activity is inhibited by ethoxyzolamide, dithiothreitol, cyanide, and divalent metal chelators dipicolinic acid and nitrilotriacetic acid. Its function is as follows. Reversible hydration of carbon dioxide. Essential for chemolithotrophic carbon dioxide fixation, supplies CO(2) to RuBisCO (ribulose bisphosphate carboxylase, cbbL-cbbS) in the carboxysome. There are estimated to be 40 CsoSCA dimers per carboxysome. Unlike beta-carboxysomes, alpha-carboxysomes (Cb) can form without cargo protein. CsoS2 is essential for Cb formation and is also capable of targeting foreign proteins to the Cb. The Cb shell assembles with the aid of CsoS2; CsoS1A, CsoS1B and CsoS1C form the majority of the shell while CsoS4A and CsoS4B form vertices. CsoS1D forms pseudohexamers that probably control metabolite flux into and out of the shell. This chain is Carboxysome shell carbonic anhydrase, found in Halothiobacillus neapolitanus (strain ATCC 23641 / c2) (Thiobacillus neapolitanus).